The primary structure comprises 118 residues: Large ribosomal subunit protein uL22c (118 aa).

The protein belongs to the universal ribosomal protein uL22 family. In terms of assembly, part of the 50S ribosomal subunit.

It is found in the plastid. The protein localises to the organellar chromatophore. This protein binds specifically to 23S rRNA. Functionally, the globular domain of the protein is located near the polypeptide exit tunnel on the outside of the subunit, while an extended beta-hairpin is found that lines the wall of the exit tunnel in the center of the 70S ribosome. In Paulinella chromatophora, this protein is Large ribosomal subunit protein uL22c (rpl22).